Reading from the N-terminus, the 660-residue chain is MALVTLRRNLYHLSDFRIHGALAALKTQQVNHVHKTVKEHLCPWFWSQHPGPIRVRFHHAHCKKFHSENGNDLHPVGEPGFSQVHNWDRFEHSVKNVDEQMFYRKLNSFTSSGEILRFVSTLETLPDTMMAGALHRICEVERKDGDQRLPKEILESSAFQALCDRFGRDPSDLSNAGLVTAFQALTLLCGDPQSHLLMNLEAECQHRLERGGLDVHSLCILGETLIKLHGPGCSTLDLIIYQLQGESLETFTPEDIVTVYRLLQASPEKADQQQRFLNKINHFSLSLVSNLSPKLMSQMLTALVVLDQTQALPLVIKLSKYVVRHIARFTSEELRKVLEALIYFGHSDRFFTETLEQHVASLCLTLDPELVSRVMEYCSRKLILSEPIFNAVAETFVCQAEKFSPSQTAKLIEPFGKLNYLPPNASALFRKLENMLLTRFNHFPPKTLLRLLHSCSLIESHPVNFMAKIFSPYFLQQLQGAESYLDRLSLAQLTQLFLTSILECPFYKGPKLLPKFQVKSFLTPCSSLETPMDFHLYKSVMIGLIDLLGARLYFSSKVLTPYCYTIDVEIKLDEDGFVLPFTIDEDVHKRVALCIDGPKRFCLNSKHLLGKEATKQRHLRLLGYQVVQIPYYEIEMLKSRLELVDYLQGKLFSQNSGGHW.

The transit peptide at 1–57 (MALVTLRRNLYHLSDFRIHGALAALKTQQVNHVHKTVKEHLCPWFWSQHPGPIRVRF) directs the protein to the mitochondrion. The 59-residue stretch at 591–649 (VALCIDGPKRFCLNSKHLLGKEATKQRHLRLLGYQVVQIPYYEIEMLKSRLELVDYLQG) folds into the RAP domain.

This sequence belongs to the FAST kinase family.

It is found in the mitochondrion. Functionally, required for normal mitochondrial respiration. Increases steady-state levels and half-lives of a subset of mature mitochondrial mRNAs MT-ND2, MT-ND3, MT-CYTB, MT-CO2, and MT-ATP8/6. Promotes MT-CO1 mRNA translation and increases mitochondrial complex IV assembly and activity. This is FAST kinase domain-containing protein 3, mitochondrial (FASTKD3) from Bos taurus (Bovine).